The chain runs to 318 residues: Ferrochelatase (318 aa).

Residues H186 and E264 each coordinate Fe cation.

Belongs to the ferrochelatase family.

Its subcellular location is the cytoplasm. It catalyses the reaction heme b + 2 H(+) = protoporphyrin IX + Fe(2+). It participates in porphyrin-containing compound metabolism; protoheme biosynthesis; protoheme from protoporphyrin-IX: step 1/1. In terms of biological role, catalyzes the ferrous insertion into protoporphyrin IX. This is Ferrochelatase from Chlamydia abortus (strain DSM 27085 / S26/3) (Chlamydophila abortus).